Here is a 137-residue protein sequence, read N- to C-terminus: Nucleoside diphosphate kinase (137 aa).

The ATP site is built by K9, F57, R85, T91, R102, and N112. Catalysis depends on H115, which acts as the Pros-phosphohistidine intermediate.

Belongs to the NDK family. In terms of assembly, homotetramer. The cofactor is Mg(2+).

The protein localises to the cytoplasm. The enzyme catalyses a 2'-deoxyribonucleoside 5'-diphosphate + ATP = a 2'-deoxyribonucleoside 5'-triphosphate + ADP. The catalysed reaction is a ribonucleoside 5'-diphosphate + ATP = a ribonucleoside 5'-triphosphate + ADP. Its function is as follows. Major role in the synthesis of nucleoside triphosphates other than ATP. The ATP gamma phosphate is transferred to the NDP beta phosphate via a ping-pong mechanism, using a phosphorylated active-site intermediate. The sequence is that of Nucleoside diphosphate kinase from Campylobacter fetus subsp. fetus (strain 82-40).